The sequence spans 199 residues: MKKLTEKQQKVLDFIKNYIQQNGYSPSIRDIAKHFKLTPRGAHIHVIALEKKGYITRNPKNSRSISLVKRQESILIPVKGKISAGMGIEMFEIVDEEIEIPVRMISGFGNYFALKVEGNSMIDAHIINGDYVILKKQYRIPNGQIAAVVFDNKVTLKRFYHKKDKVELVPENKDMNPIVCDAKDIKVIGKLVGIIRFYE.

Residues 28–47 (IRDIAKHFKLTPRGAHIHVI) constitute a DNA-binding region (H-T-H motif). Active-site for autocatalytic cleavage activity residues include S120 and K157.

This sequence belongs to the peptidase S24 family. In terms of assembly, homodimer.

The catalysed reaction is Hydrolysis of Ala-|-Gly bond in repressor LexA.. Its function is as follows. Represses a number of genes involved in the response to DNA damage (SOS response), including recA and lexA. In the presence of single-stranded DNA, RecA interacts with LexA causing an autocatalytic cleavage which disrupts the DNA-binding part of LexA, leading to derepression of the SOS regulon and eventually DNA repair. The polypeptide is LexA repressor (Thermosipho melanesiensis (strain DSM 12029 / CIP 104789 / BI429)).